We begin with the raw amino-acid sequence, 75 residues long: Large ribosomal subunit protein bL31 (75 aa).

Cysteine 16, cysteine 18, cysteine 36, and cysteine 39 together coordinate Zn(2+).

The protein belongs to the bacterial ribosomal protein bL31 family. Type A subfamily. As to quaternary structure, part of the 50S ribosomal subunit. Zn(2+) serves as cofactor.

In terms of biological role, binds the 23S rRNA. In Desulforapulum autotrophicum (strain ATCC 43914 / DSM 3382 / VKM B-1955 / HRM2) (Desulfobacterium autotrophicum), this protein is Large ribosomal subunit protein bL31.